We begin with the raw amino-acid sequence, 465 residues long: FAD-dependent monooxygenase pyr5 (465 aa).

The signal sequence occupies residues 1–16 (MRVLIIGGSIAGLTLA). Residues Glu30, Gly44, and Arg103 each contribute to the FAD site. Tyr210 is an active-site residue. 2 residues coordinate FAD: Asp306 and Ala319. The helical transmembrane segment at 440 to 456 (PTFPLTVAGLCLVAIVI) threads the bilayer.

The protein belongs to the paxM FAD-dependent monooxygenase family. Requires FAD as cofactor.

Its subcellular location is the membrane. It carries out the reaction 4-hydroxy-3-[(2E,6E)-farnesyl]-6-(pyridin-3-yl)-2H-pyran-2-one + NADPH + O2 + H(+) = 2-oxo-3-[(8S)-epoxy-(2E,6E)-farnesyl]-6-(pyridin-3-yl)-2H-pyran-4-olate + NADP(+) + H2O. It functions in the pathway secondary metabolite biosynthesis; terpenoid biosynthesis. FAD-dependent monooxygenase; part of the gene cluster that mediates the biosynthesis of pyripyropene A, a specific human acyl-coenzyme A:cholesterol acyltransferase 2 inhibitor. The first step of the pathway is the synthesis of nicotinyl-CoA from nicotinic acid by the nicotinic acid-CoA ligase pyr1. Nicotinyl-CoA is then a substrate of polyketide synthase pyr2 to produce 4-hydroxy-6-(3-pyridinyl)-2H-pyran-2-one (HPPO) which is further prenylated by the polyprenyl transferase pyr6 to yield farnesyl-HPPO. The next steps consist of an epoxidation of farnesyl-HPPO to epoxyfarnesyl-HPPO by FAD-dependent monooxygenase pyr5 and a cyclization of the terpenoid portion by the terpene cyclase pyr4 to yield deacetyl-pyripyropene E. The 2 cytochrome P450 monooxygenases pyr3 and pyr9, and the 2 acetyltransferases pyr7 and pyr8 are involved in the conversion of deacetyl-pyripyropene E into pyripyropene A through several cycles of oxidation and acetylation steps. Pyr7 acetylates deacetyl-pyripyropene E to pyripyropene E which is oxidized to 11-deacetyl-pyripyropene O by pyr3, which is in turn acetylated into pyripyropene O by pyr8. Pyripyropene O is then oxidized to deacetyl-pyripyropene A by pyr9. Deacetyl-pyripyropene A is finally acetylated to pyripyropene A by pyr8. This Aspergillus fumigatus (strain ATCC MYA-4609 / CBS 101355 / FGSC A1100 / Af293) (Neosartorya fumigata) protein is FAD-dependent monooxygenase pyr5.